A 69-amino-acid polypeptide reads, in one-letter code: MDRTAAQNARESLDLAFSISNFLQTGLDRHTLSILIALCEHGVNPEALAAVVKELRREAAALHQHQDQS.

This sequence belongs to the MOZART1 family. Part of the gamma-tubulin complex.

Its subcellular location is the cytoplasm. It localises to the cytoskeleton. The protein resides in the microtubule organizing center. The protein localises to the spindle. Required for gamma-tubulin complex recruitment to the microtubule organizing centers (MTOCs). The protein is Mitotic-spindle organizing protein 1 of Picea sitchensis (Sitka spruce).